Here is a 179-residue protein sequence, read N- to C-terminus: Probable galaptin lec-7 (179 aa).

One can recognise a Galectin domain in the interval 11-138 (SVYQIEENLK…SVDIESIVFK (128 aa)).

This is Probable galaptin lec-7 (lec-7) from Caenorhabditis elegans.